We begin with the raw amino-acid sequence, 157 residues long: Protein BeeE (157 aa).

The protein belongs to the phage portal family.

This is Protein BeeE (beeE) from Escherichia coli (strain K12).